The sequence spans 500 residues: Lysine--tRNA ligase (500 aa).

Positions 412 and 419 each coordinate Mg(2+).

This sequence belongs to the class-II aminoacyl-tRNA synthetase family. As to quaternary structure, homodimer. Mg(2+) is required as a cofactor.

It localises to the cytoplasm. The catalysed reaction is tRNA(Lys) + L-lysine + ATP = L-lysyl-tRNA(Lys) + AMP + diphosphate. In Kineococcus radiotolerans (strain ATCC BAA-149 / DSM 14245 / SRS30216), this protein is Lysine--tRNA ligase.